Consider the following 859-residue polypeptide: Active breakpoint cluster region-related protein (859 aa).

Positions 31–84 (AEGHEEQKGPPEGSETMPYIDESPTMSPQLSARSQGGGESISPTPPEGLAPGVE) are disordered. Positions 54 to 64 (PTMSPQLSARS) are enriched in polar residues. Residue Ser57 is modified to Phosphoserine. The 194-residue stretch at 91–284 (MRKLVLSGFL…QNFLSSINED (194 aa)) folds into the DH domain. One can recognise a PH domain in the interval 301–459 (QLVKDGFLVE…WREAIQKLQK (159 aa)). Residues 484–613 (TVHNIPVTSN…ESKNWHTDVI (130 aa)) form the C2 domain. The Rho-GAP domain occupies 647 to 845 (VKISVVTKRE…YYLQHPPISF (199 aa)).

In terms of assembly, interacts with DLG4. Expressed in brain, including the cortex, hippocampus, cerebellum, and brainstem, as well as the spinal cord (at protein level).

The protein resides in the cell projection. It is found in the dendritic spine. The protein localises to the axon. It localises to the synapse. Functionally, protein with a unique structure having two opposing regulatory activities toward small GTP-binding proteins. The C-terminus is a GTPase-activating protein domain which stimulates GTP hydrolysis by RAC1, RAC2 and CDC42. Accelerates the intrinsic rate of GTP hydrolysis of RAC1 or CDC42, leading to down-regulation of the active GTP-bound form. The central Dbl homology (DH) domain functions as guanine nucleotide exchange factor (GEF) that modulates the GTPases CDC42, RHOA and RAC1. Promotes the conversion of CDC42, RHOA and RAC1 from the GDP-bound to the GTP-bound form. Functions as an important negative regulator of neuronal RAC1 activity. Regulates macrophage functions such as CSF-1 directed motility and phagocytosis through the modulation of RAC1 activity. The polypeptide is Active breakpoint cluster region-related protein (Rattus norvegicus (Rat)).